Reading from the N-terminus, the 450-residue chain is Bifunctional protein GlmU (450 aa).

The segment at 1 to 228 is pyrophosphorylase; that stretch reads MKTALVILAA…ESETLGINSR (228 aa). Residues 8–11, Lys22, Gln75, and 80–81 contribute to the UDP-N-acetyl-alpha-D-glucosamine site; these read LAAG and GT. Residue Asp105 participates in Mg(2+) binding. Residues Gly140, Glu154, Asn169, and Asn226 each coordinate UDP-N-acetyl-alpha-D-glucosamine. Position 226 (Asn226) interacts with Mg(2+). The linker stretch occupies residues 229-249; that stretch reads TELSAAEAAFQERARTNAFEN. The interval 250-450 is N-acetyltransferase; the sequence is GVTLPAPGTV…AKKAKQQRGS (201 aa). Positions 315 and 333 each coordinate UDP-N-acetyl-alpha-D-glucosamine. The active-site Proton acceptor is His345. Residues Tyr348 and Asn359 each coordinate UDP-N-acetyl-alpha-D-glucosamine. Acetyl-CoA contacts are provided by residues Ala362, 368-369, Ser387, Ser405, and Arg422; that span reads NY.

In the N-terminal section; belongs to the N-acetylglucosamine-1-phosphate uridyltransferase family. The protein in the C-terminal section; belongs to the transferase hexapeptide repeat family. In terms of assembly, homotrimer. Mg(2+) is required as a cofactor.

It localises to the cytoplasm. It carries out the reaction alpha-D-glucosamine 1-phosphate + acetyl-CoA = N-acetyl-alpha-D-glucosamine 1-phosphate + CoA + H(+). The enzyme catalyses N-acetyl-alpha-D-glucosamine 1-phosphate + UTP + H(+) = UDP-N-acetyl-alpha-D-glucosamine + diphosphate. It functions in the pathway nucleotide-sugar biosynthesis; UDP-N-acetyl-alpha-D-glucosamine biosynthesis; N-acetyl-alpha-D-glucosamine 1-phosphate from alpha-D-glucosamine 6-phosphate (route II): step 2/2. The protein operates within nucleotide-sugar biosynthesis; UDP-N-acetyl-alpha-D-glucosamine biosynthesis; UDP-N-acetyl-alpha-D-glucosamine from N-acetyl-alpha-D-glucosamine 1-phosphate: step 1/1. It participates in bacterial outer membrane biogenesis; LPS lipid A biosynthesis. Functionally, catalyzes the last two sequential reactions in the de novo biosynthetic pathway for UDP-N-acetylglucosamine (UDP-GlcNAc). The C-terminal domain catalyzes the transfer of acetyl group from acetyl coenzyme A to glucosamine-1-phosphate (GlcN-1-P) to produce N-acetylglucosamine-1-phosphate (GlcNAc-1-P), which is converted into UDP-GlcNAc by the transfer of uridine 5-monophosphate (from uridine 5-triphosphate), a reaction catalyzed by the N-terminal domain. This chain is Bifunctional protein GlmU, found in Roseobacter denitrificans (strain ATCC 33942 / OCh 114) (Erythrobacter sp. (strain OCh 114)).